A 91-amino-acid chain; its full sequence is MTKYIYIALVGVVVVLFGALRYQSSVIDELEITTKQQEDTNKSLSLALQQERNDEIERIATENAESVKTIIKTQPCAHTRLPQSVLDRLHE.

Residues Ile7 to Gln23 form a helical membrane-spanning segment.

The protein localises to the membrane. This is an uncharacterized protein from Haemophilus influenzae (strain ATCC 51907 / DSM 11121 / KW20 / Rd).